The sequence spans 855 residues: Inactive rhomboid protein 1 (855 aa).

Positions 1–36 are disordered; it reads MSEARRDSTSSLQRKKPPWLKLDIPSAAPPAAEEPS. The Cytoplasmic segment spans residues 1 to 411; the sequence is MSEARRDSTS…HRPFFTYWLT (411 aa). Residues 25-36 show a composition bias toward low complexity; sequence PSAAPPAAEEPS. A phosphoserine mark is found at S76 and S176. 2 positions are modified to phosphothreonine: T180 and T183. S390 carries the phosphoserine modification. A helical transmembrane segment spans residues 412 to 432; the sequence is FVHSLVTVLAVCIYGIAPVGF. Residues 433 to 655 lie on the Lumenal side of the membrane; that stretch reads SQHETVDSVL…NPEVPDQFYR (223 aa). The N-linked (GlcNAc...) asparagine glycan is linked to N583. The helical transmembrane segment at 656–676 threads the bilayer; it reads LWLSLFLHAGILHCLVSICFQ. Topologically, residues 677–691 are cytoplasmic; the sequence is MTVLRDLEKLAGWHR. The chain crosses the membrane as a helical span at residues 692 to 712; it reads IAIIYLLSGVTGNLASAIFLP. Topologically, residues 713 to 714 are lumenal; the sequence is YR. A helical membrane pass occupies residues 715–735; that stretch reads AEVGPAGSQFGILACLFVELF. Topologically, residues 736 to 746 are cytoplasmic; the sequence is QSWQILARPWR. Residues 747 to 767 form a helical membrane-spanning segment; that stretch reads AFFKLLAVVLFLFTFGLLPWI. The Lumenal portion of the chain corresponds to 768 to 772; sequence DNFAH. The chain crosses the membrane as a helical span at residues 773–793; it reads ISGFISGLFLSFAFLPYISFG. Topologically, residues 794–803 are cytoplasmic; sequence KFDLYRKRCQ. Residues 804 to 824 form a helical membrane-spanning segment; that stretch reads IIVFQVVFLGLLAGLVVLFYF. Residues 825-855 lie on the Lumenal side of the membrane; the sequence is YPVRCEWCEFLTCIPFTDKFCEKYELDAQLH.

The protein belongs to the peptidase S54 family. As to quaternary structure, homodimer, or homooligomer. Interacts with TGFA and HBEGF. Interacts with EGF; may retain EGF in the endoplasmic reticulum and regulates its degradation through the endoplasmic reticulum-associated degradation (ERAD). Interacts (via cytoplasmic N-terminus) with FRMD8/iTAP; this interaction leads to mutual protein stabilization. Interacts with ADAM17/TACE.

The protein localises to the endoplasmic reticulum membrane. It is found in the golgi apparatus membrane. In terms of biological role, regulates ADAM17 protease, a sheddase of the epidermal growth factor (EGF) receptor ligands and TNF, thereby plays a role in sleep, cell survival, proliferation, migration and inflammation. Does not exhibit any protease activity on its own. This chain is Inactive rhomboid protein 1 (RHBDF1), found in Plecturocebus moloch (Dusky titi monkey).